The primary structure comprises 146 residues: MSLISGIASILAIGLLSPVQSILALILLFVTVAINLYTSGYVLMGILYILVYVGAIAILFLFILSLLNIEYKPTGGMHPLVIVLILIPLIPLDIAFEPIAIVESVSTTYNELSIVGTLFYSEYAPMLVIIGIILIVSVIGAIAMTR.

4 helical membrane passes run 10–30 (ILAI…LLFV), 43–63 (LMGI…FLFI), 81–101 (VIVL…PIAI), and 124–144 (APML…AIAM).

Belongs to the complex I subunit 6 family.

It localises to the mitochondrion membrane. It catalyses the reaction a ubiquinone + NADH + 5 H(+)(in) = a ubiquinol + NAD(+) + 4 H(+)(out). Core subunit of the mitochondrial membrane respiratory chain NADH dehydrogenase (Complex I) that is believed to belong to the minimal assembly required for catalysis. Complex I functions in the transfer of electrons from NADH to the respiratory chain. The immediate electron acceptor for the enzyme is believed to be ubiquinone. This chain is NADH-ubiquinone oxidoreductase chain 6 (NAD6), found in Candida albicans (strain SC5314 / ATCC MYA-2876) (Yeast).